Here is a 799-residue protein sequence, read N- to C-terminus: Potassium transporter 21 (799 aa).

The Cytoplasmic segment spans residues 1–56 (MDPGVEKKKQQMELVDVESGGLPVERQDSLFREAVRAEHAGAAHWDEQDSWGRTMS). The helical transmembrane segment at 57–77 (LAFQCVGILYGDIGTSSLYVY) threads the bilayer. Over 78 to 93 (SSTFEHGIGHPDDVVG) the chain is Extracellular. A helical membrane pass occupies residues 94-114 (VLSLIVYSFMLFTVIKIVFVA). Residues 115 to 181 (LHANDHGDGG…QLLEASKAAK (67 aa)) lie on the Cytoplasmic side of the membrane. A helical transmembrane segment spans residues 182-202 (ISLFLLTILAIAMVISDAVLT). The Extracellular portion of the chain corresponds to 203 to 219 (PPISVLSAVGGLREKVP). A helical membrane pass occupies residues 220 to 240 (HLTTDQIVWITVAILVVLFAI). Topologically, residues 241–251 (QRYGTDKVGYS) are cytoplasmic. Residues 252-272 (FAPIILLWLLLIGATGLYNLI) traverse the membrane as a helical segment. Residues 273-301 (KHDISVLRAFNPKYIIDYFRRNKKEGWVS) are Extracellular-facing. The chain crosses the membrane as a helical span at residues 302-322 (LGSILLCFTGSEALFANLGYF). At 323–328 (SIRSIQ) the chain is on the cytoplasmic side. Residues 329 to 349 (LSFSFALLPSVLLTYIGQAAF) traverse the membrane as a helical segment. Topologically, residues 350-362 (LSKNPKNVANTFF) are extracellular. Residues 363–383 (AATPISLFWPTFIMAIAASII) traverse the membrane as a helical segment. Residues 384-420 (GSQAMISCAFATVSHLQSLSCFPRVKILHTSKRFPGQ) lie on the Cytoplasmic side of the membrane. Residues 421-441 (LYIPGVNFLLCVAACVVTVSF) form a helical membrane-spanning segment. Residues 442–452 (KTTVIIGKAHE) lie on the Extracellular side of the membrane. Residues 453–473 (ICVILVMIITTLLMTIVMLLV) traverse the membrane as a helical segment. Topologically, residues 474–475 (WK) are cytoplasmic. A helical transmembrane segment spans residues 476–496 (INILWVALFFITFTSTEAVYL). The Extracellular segment spans residues 497 to 508 (SSVLYKFTHGPY). Residues 509 to 529 (VPVAMSVVLMVVMIVWHYVHV) form a helical membrane-spanning segment. Residues 530 to 799 (KRYKYELEHT…LLKVGISYEI (270 aa)) are Cytoplasmic-facing.

This sequence belongs to the HAK/KUP transporter (TC 2.A.72.3) family.

The protein resides in the membrane. In terms of biological role, high-affinity potassium transporter. The sequence is that of Potassium transporter 21 (HAK21) from Oryza sativa subsp. japonica (Rice).